A 621-amino-acid chain; its full sequence is MPSTSKRPTAIVIGSGVGGVSTAARLARAGFHVTVLEKNNFTGGRCSLIHHEGYRFDQGPSLLLLPGLFHRTFAELGTSLEQEGVKLLKCEPNYMIHFSDGEKFTLSSDLSVMKTEVEKWEGKEGYTRYLEFLKESHGHYELSVREVLLRNFEGLTAMLRPEFLRHLLQLHPFESIWTRAGKYFWTERLRRVFTFGSMYMGMSPFDAPGTYSLLQYTELAEGIWYPVGGFHRVVEALVKIGEREGVDFRMETAVKKILLSEDGGVAKGVELEDGRRLEADVVVNNSDLVYAYEKLLPIKTPYAESLKGRPGSCSSISFYWALDRQVPELEAHNIFLADEYRESFDSIFKKHLIPDEPSFYVNVPSRVDSTAAPEGKDSVVVLVPVGHLLEEDRHASQAHQLSASRNGHISSASPPDQPGLTPTEKQDWPAMISLARKTILSTIQSRTNVDLTPLIIHESTNSPLSWKQTFNLDRGAILGLSHSFFNVLCFRPTTRARKPGAFDAQLLKFGVLGRAAEVIIDAFRGRGKDIKGLYMVGASAHPGTGVPICLAGGALVAEQICGDYGVDIPWKEEERKGRDVGGKRKLDVLESPMWLDSWEQWVSVLIYLLVGIFAWLWMKFR.

The N-terminal stretch at 1–23 (MPSTSKRPTAIVIGSGVGGVSTA) is a signal peptide. The tract at residues 394–425 (HASQAHQLSASRNGHISSASPPDQPGLTPTEK) is disordered. Residues 397 to 414 (QAHQLSASRNGHISSASP) are compositionally biased toward polar residues. A helical membrane pass occupies residues 598 to 618 (WEQWVSVLIYLLVGIFAWLWM).

This sequence belongs to the carotenoid/retinoid oxidoreductase family. Requires NAD(+) as cofactor.

It is found in the membrane. The catalysed reaction is 15-cis-phytoene + 5 A = all-trans-3,4-didehydrolycopene + 5 AH2. The protein operates within carotenoid biosynthesis; lycopene biosynthesis. Functionally, phytoene desaturase involved in the carotenoid biosynthesis pathway. Converts phytoene into 3,4-didehydrolycopene via the intermediary of phytofluene, zeta-carotene, neurosporene and lycopene, by introducing up to five double bonds into phytoene. The sequence is that of Phytoene desaturase (PDH1) from Cercospora nicotianae (Barn spot disease fungus).